The chain runs to 220 residues: Splicing factor U2AF 26 kDa subunit (220 aa).

Alanine 2 bears the N-acetylalanine mark. The C3H1-type 1 zinc finger occupies 12–40 (EKDKVNCSFYFKIGACRHGDRCSRLHNKP). In terms of domain architecture, RRM spans 65-147 (SHCHVSDVEV…QAVHAELSPV (83 aa)). The C3H1-type 2 zinc-finger motif lies at 149–176 (DFRESCCRQYEMGECTRGGFCNFMHLRP). The disordered stretch occupies residues 186 to 220 (YGRGPRRRSPPRSHTGHRPRERNRRRSPDHRHGRF). The segment covering 189-220 (GPRRRSPPRSHTGHRPRERNRRRSPDHRHGRF) has biased composition (basic residues).

The protein belongs to the splicing factor SR family. In terms of assembly, interacts with GFI1, U2AF2 and C1QBP.

It localises to the nucleus. It is found in the nucleus speckle. The protein localises to the cytoplasm. Its function is as follows. RNA-binding protein that function as a pre-mRNA splicing factor. Plays a critical role in both constitutive and enhancer-dependent splicing by mediating protein-protein interactions and protein-RNA interactions required for accurate 3'-splice site selection. Acts by enhancing the binding of U2AF2 to weak pyrimidine tracts. Also participates in the regulation of alternative pre-mRNA splicing. Activates exon 5 skipping of PTPRC during T-cell activation; an event reversed by GFI1. Binds to RNA at the AG dinucleotide at the 3'-splice site. Shows a preference for AGC or AGA. The protein is Splicing factor U2AF 26 kDa subunit (U2AF1L4) of Bos taurus (Bovine).